A 145-amino-acid polypeptide reads, in one-letter code: MIALIQRALSANVVVDGEVVGEIGPGLLILLGVEQQDTEQKAQRLCEKVLGYRIFGDENDKMNLNVKQAGGSVLVVSQFTLVADTQKGMRPSFSRGASPAEADRLYQYFVAQCREHGVKTETGLFAADMKVSLVNDGPVTFWLQI.

The Gly-cisPro motif, important for rejection of L-amino acids signature appears at 137 to 138 (GP).

This sequence belongs to the DTD family. Homodimer.

The protein localises to the cytoplasm. It catalyses the reaction glycyl-tRNA(Ala) + H2O = tRNA(Ala) + glycine + H(+). The enzyme catalyses a D-aminoacyl-tRNA + H2O = a tRNA + a D-alpha-amino acid + H(+). Its function is as follows. An aminoacyl-tRNA editing enzyme that deacylates mischarged D-aminoacyl-tRNAs. Also deacylates mischarged glycyl-tRNA(Ala), protecting cells against glycine mischarging by AlaRS. Acts via tRNA-based rather than protein-based catalysis; rejects L-amino acids rather than detecting D-amino acids in the active site. By recycling D-aminoacyl-tRNA to D-amino acids and free tRNA molecules, this enzyme counteracts the toxicity associated with the formation of D-aminoacyl-tRNA entities in vivo and helps enforce protein L-homochirality. In Yersinia enterocolitica serotype O:8 / biotype 1B (strain NCTC 13174 / 8081), this protein is D-aminoacyl-tRNA deacylase.